A 311-amino-acid polypeptide reads, in one-letter code: tRNA-cytidine(32) 2-sulfurtransferase (311 aa).

The short motif at 47–52 is the PP-loop motif element; it reads SGGKDS. Residues Cys122, Cys125, and Cys213 each contribute to the [4Fe-4S] cluster site.

The protein belongs to the TtcA family. Homodimer. Mg(2+) serves as cofactor. [4Fe-4S] cluster is required as a cofactor.

Its subcellular location is the cytoplasm. It carries out the reaction cytidine(32) in tRNA + S-sulfanyl-L-cysteinyl-[cysteine desulfurase] + AH2 + ATP = 2-thiocytidine(32) in tRNA + L-cysteinyl-[cysteine desulfurase] + A + AMP + diphosphate + H(+). It functions in the pathway tRNA modification. In terms of biological role, catalyzes the ATP-dependent 2-thiolation of cytidine in position 32 of tRNA, to form 2-thiocytidine (s(2)C32). The sulfur atoms are provided by the cysteine/cysteine desulfurase (IscS) system. This Escherichia coli O7:K1 (strain IAI39 / ExPEC) protein is tRNA-cytidine(32) 2-sulfurtransferase.